A 475-amino-acid polypeptide reads, in one-letter code: ESX-3 secretion system protein EccD3 (475 aa).

11 helical membrane-spanning segments follow: residues 132-152, 161-181, 186-206, 212-232, 241-261, 264-284, 333-353, 354-374, 384-404, 409-429, and 453-473; these read IARG…GLSV, LLGQ…ALAV, AVLA…AFAL, FGAP…LISM, IAVF…AGAA, WVIS…IVTV, GVIA…VSSA, NASP…ALRA, AWLL…FVIG, AALW…VAAL, and GLDA…SLVL.

The protein belongs to the EccD/Snm4 family. As to quaternary structure, part of the ESX-3 / type VII secretion system (T7SS), which is composed of cytosolic and membrane components. The ESX-3 membrane complex is composed of EccB3, EccC3, EccD3 and EccE3.

It is found in the cell inner membrane. Its function is as follows. Part of the ESX-3 specialized secretion system, which is required for siderophore-mediated iron acquisition and for the secretion of EsxH and EsxG. The sequence is that of ESX-3 secretion system protein EccD3 from Mycolicibacterium smegmatis (strain ATCC 700084 / mc(2)155) (Mycobacterium smegmatis).